The chain runs to 228 residues: Cytidylate kinase (228 aa).

Residue 11 to 19 coordinates ATP; that stretch reads GPAGTGKSS.

This sequence belongs to the cytidylate kinase family. Type 1 subfamily.

It localises to the cytoplasm. The enzyme catalyses CMP + ATP = CDP + ADP. It carries out the reaction dCMP + ATP = dCDP + ADP. The sequence is that of Cytidylate kinase from Mycobacterium avium (strain 104).